A 91-amino-acid polypeptide reads, in one-letter code: Small ribosomal subunit protein uS17 (91 aa).

It belongs to the universal ribosomal protein uS17 family. Part of the 30S ribosomal subunit.

Its function is as follows. One of the primary rRNA binding proteins, it binds specifically to the 5'-end of 16S ribosomal RNA. This is Small ribosomal subunit protein uS17 from Thermobifida fusca (strain YX).